The sequence spans 146 residues: UPF0735 ACT domain-containing protein CHY_1913 (146 aa).

The 76-residue stretch at 70–145 (TLALNLEHRA…GVSKVELVGQ (76 aa)) folds into the ACT domain.

This sequence belongs to the UPF0735 family.

The protein is UPF0735 ACT domain-containing protein CHY_1913 of Carboxydothermus hydrogenoformans (strain ATCC BAA-161 / DSM 6008 / Z-2901).